A 516-amino-acid chain; its full sequence is Solute carrier family 49 member A3 (516 aa).

The segment covering 1-10 has biased composition (basic and acidic residues); it reads MAGTMDRLED. The segment at 1-22 is disordered; it reads MAGTMDRLEDCNSPETSGTAGD. The next 12 membrane-spanning stretches (helical) occupy residues 34-54, 74-94, 104-124, 139-159, 170-190, 199-219, 253-273, 289-309, 321-341, 344-364, 382-402, and 425-445; these read WVFL…WLSF, WLSL…IWVL, ILGA…CLPV, LCAL…ALWF, ISTM…PALV, MLGI…VCLW, VLLA…SALL, LCGA…GLYV, IGLC…QLQG, LALA…APVV, GLIF…LTAL, and VSLL…VIFF. The disordered stretch occupies residues 453–516; sequence EAESGGSSSP…EWAETMPRDV (64 aa). Basic and acidic residues predominate over residues 504 to 516; it reads GHSEWAETMPRDV.

Belongs to the major facilitator superfamily.

Its subcellular location is the membrane. This Mus musculus (Mouse) protein is Solute carrier family 49 member A3 (Slc49a3).